A 595-amino-acid polypeptide reads, in one-letter code: O-phosphoseryl-tRNA(Sec) selenium transferase (595 aa).

Arg75 lines the pyridoxal 5'-phosphate pocket. The tract at residues 96-106 (GRSGDLFSEQP) is phosphate loop (P-loop). Residues Arg97, Ser98, and Gln105 each contribute to the substrate site. A compositionally biased stretch (polar residues) spans 174 to 187 (RTVTKDSTSATSAA). Disordered regions lie at residues 174–208 (RTVTKDSTSATSAAPVQEPPMSEADRDRHDRTSLP) and 257–278 (STNRDSLDRGQDSIGSPSTPTS). Residues 196–205 (EADRDRHDRT) are compositionally biased toward basic and acidic residues. Arg358 provides a ligand contact to tRNA. Lys371 is modified (N6-(pyridoxal phosphate)lysine). Position 400 (Arg400) interacts with substrate.

This sequence belongs to the SepSecS family. In terms of assembly, homotetramer composed of two homodimers. The cofactor is pyridoxal 5'-phosphate.

It is found in the cytoplasm. The enzyme catalyses O-phospho-L-seryl-tRNA(Sec) + selenophosphate + H2O = L-selenocysteinyl-tRNA(Sec) + 2 phosphate. The protein operates within aminoacyl-tRNA biosynthesis; selenocysteinyl-tRNA(Sec) biosynthesis; selenocysteinyl-tRNA(Sec) from L-seryl-tRNA(Sec) (archaeal/eukaryal route): step 2/2. Its function is as follows. Converts O-phosphoseryl-tRNA(Sec) to selenocysteinyl-tRNA(Sec) required for selenoprotein biosynthesis. The sequence is that of O-phosphoseryl-tRNA(Sec) selenium transferase from Leishmania donovani.